A 483-amino-acid polypeptide reads, in one-letter code: tRNA sulfurtransferase (483 aa).

A THUMP domain is found at 61-165; the sequence is PLVADALTLI…NDRLLLITER (105 aa). ATP is bound by residues 183-184, K265, G287, and Q296; that span reads LI. Cysteines 344 and 457 form a disulfide. Residues 405–483 form the Rhodanese domain; that stretch reads LGSGDVVLDI…GFQNVKVYRP (79 aa). Residue C457 is the Cysteine persulfide intermediate of the active site.

Belongs to the ThiI family.

The protein resides in the cytoplasm. It carries out the reaction [ThiI sulfur-carrier protein]-S-sulfanyl-L-cysteine + a uridine in tRNA + 2 reduced [2Fe-2S]-[ferredoxin] + ATP + H(+) = [ThiI sulfur-carrier protein]-L-cysteine + a 4-thiouridine in tRNA + 2 oxidized [2Fe-2S]-[ferredoxin] + AMP + diphosphate. It catalyses the reaction [ThiS sulfur-carrier protein]-C-terminal Gly-Gly-AMP + S-sulfanyl-L-cysteinyl-[cysteine desulfurase] + AH2 = [ThiS sulfur-carrier protein]-C-terminal-Gly-aminoethanethioate + L-cysteinyl-[cysteine desulfurase] + A + AMP + 2 H(+). Its pathway is cofactor biosynthesis; thiamine diphosphate biosynthesis. Catalyzes the ATP-dependent transfer of a sulfur to tRNA to produce 4-thiouridine in position 8 of tRNAs, which functions as a near-UV photosensor. Also catalyzes the transfer of sulfur to the sulfur carrier protein ThiS, forming ThiS-thiocarboxylate. This is a step in the synthesis of thiazole, in the thiamine biosynthesis pathway. The sulfur is donated as persulfide by IscS. In Sodalis glossinidius (strain morsitans), this protein is tRNA sulfurtransferase.